Reading from the N-terminus, the 1171-residue chain is APC-related protein 1 (1171 aa).

Residues 1–54 (MSSSSSDENETTIHSSSNPGSSGIYSQLKAGSSKRPSVRHDVSDAEDDEEPYEG) are disordered. The interval 1 to 481 (MSSSSSDENE…LSLRATRASP (481 aa)) is required for interaction with bar-1 and hmp-2. Residues 15-26 (SSSNPGSSGIYS) show a composition bias toward low complexity. The ARM repeat unit spans residues 312-356 (NCLKVLANILSPDARFTTLVDSASGILKYVSQYLATNSSHLELRS). Disordered stretches follow at residues 587–617 (PVDD…NPGS), 662–699 (HPED…GTTV), 720–741 (RKTS…LEVE), 767–822 (EEMP…EMTT), 837–936 (PRSR…TMRI), and 995–1030 (SSGS…SSLP). A required for interaction with pry-1 region spans residues 591–1171 (DLDIPTSTVM…NPKQMLVTIV (581 aa)). Composition is skewed to polar residues over residues 595-617 (PTST…NPGS) and 666-697 (NQMT…SDGT). Polar residues predominate over residues 788-799 (FSPSQKTTSSPA). Over residues 857-874 (EPDRSSHSKNEEADRRDA) the composition is skewed to basic and acidic residues. Composition is skewed to polar residues over residues 890 to 913 (RGSS…SSED) and 1002 to 1028 (LQKA…SVSS).

The protein belongs to the adenomatous polyposis coli (APC) family. In terms of assembly, interacts (via N-terminus) with bar-1 and hmp-2; the interaction with hmp-2 is relatively weak. Interacts (via C-terminus) with pry-1 (via N-terminus). Probably associates with bar-1, gsk-3, pry-1 in a complex.

Its subcellular location is the cell junction. The protein localises to the adherens junction. It localises to the cytoplasm. The protein resides in the nucleus. In terms of biological role, has a role in endoderm cell specification and pharyngeal development. Required for the migration of epithelial cells, organization of the anterior seam cells and ceh-13 expression during embryo morphogenesis. Prevents hyperactivation of the Wnt signaling pathway during endoderm development, probably by preventing hmp-2 nuclear translocation. During larval development, apr-1 is required for expression of lin-39 in P3-8.p. Shown to negatively regulate Wnt signaling in vulval precursor cells. Has a role in cell division by establishing the polarity of the mother cell which forms the asymmetries of the daughter nuclei. Thought to regulate export of wrm-1 from the nucleus possibly as part of a complex involving pry-1. In Caenorhabditis briggsae, this protein is APC-related protein 1.